The primary structure comprises 162 residues: Endoribonuclease YbeY (162 aa).

Zn(2+)-binding residues include H128, H132, and H138.

This sequence belongs to the endoribonuclease YbeY family. The cofactor is Zn(2+).

The protein resides in the cytoplasm. Its function is as follows. Single strand-specific metallo-endoribonuclease involved in late-stage 70S ribosome quality control and in maturation of the 3' terminus of the 16S rRNA. The sequence is that of Endoribonuclease YbeY from Lactococcus lactis subsp. cremoris (strain SK11).